We begin with the raw amino-acid sequence, 208 residues long: Protein GrpE (208 aa).

Residues 1 to 62 (MTEKDESVKS…ETAVDPKDEE (62 aa)) are disordered. Positions 46 to 55 (SNEESSEETA) are enriched in acidic residues.

Belongs to the GrpE family. Homodimer.

It localises to the cytoplasm. In terms of biological role, participates actively in the response to hyperosmotic and heat shock by preventing the aggregation of stress-denatured proteins, in association with DnaK and GrpE. It is the nucleotide exchange factor for DnaK and may function as a thermosensor. Unfolded proteins bind initially to DnaJ; upon interaction with the DnaJ-bound protein, DnaK hydrolyzes its bound ATP, resulting in the formation of a stable complex. GrpE releases ADP from DnaK; ATP binding to DnaK triggers the release of the substrate protein, thus completing the reaction cycle. Several rounds of ATP-dependent interactions between DnaJ, DnaK and GrpE are required for fully efficient folding. This Staphylococcus haemolyticus (strain JCSC1435) protein is Protein GrpE.